Here is a 174-residue protein sequence, read N- to C-terminus: Ribosome maturation factor RimP (174 aa).

Belongs to the RimP family.

Its subcellular location is the cytoplasm. Required for maturation of 30S ribosomal subunits. This is Ribosome maturation factor RimP from Acinetobacter baumannii (strain SDF).